The following is a 269-amino-acid chain: 4-hydroxy-tetrahydrodipicolinate reductase (269 aa).

NAD(+) is bound by residues 11–16 (GASGRM) and E37. R38 is a binding site for NADP(+). NAD(+) is bound by residues 101 to 103 (GTT) and 125 to 128 (AGNM). Residue H158 is the Proton donor/acceptor of the active site. H159 is a (S)-2,3,4,5-tetrahydrodipicolinate binding site. Catalysis depends on K162, which acts as the Proton donor. Residue 168-169 (GT) participates in (S)-2,3,4,5-tetrahydrodipicolinate binding.

The protein belongs to the DapB family.

It is found in the cytoplasm. The enzyme catalyses (S)-2,3,4,5-tetrahydrodipicolinate + NAD(+) + H2O = (2S,4S)-4-hydroxy-2,3,4,5-tetrahydrodipicolinate + NADH + H(+). It catalyses the reaction (S)-2,3,4,5-tetrahydrodipicolinate + NADP(+) + H2O = (2S,4S)-4-hydroxy-2,3,4,5-tetrahydrodipicolinate + NADPH + H(+). It functions in the pathway amino-acid biosynthesis; L-lysine biosynthesis via DAP pathway; (S)-tetrahydrodipicolinate from L-aspartate: step 4/4. In terms of biological role, catalyzes the conversion of 4-hydroxy-tetrahydrodipicolinate (HTPA) to tetrahydrodipicolinate. In Cereibacter sphaeroides (strain ATCC 17029 / ATH 2.4.9) (Rhodobacter sphaeroides), this protein is 4-hydroxy-tetrahydrodipicolinate reductase.